Reading from the N-terminus, the 115-residue chain is NADH-ubiquinone oxidoreductase chain 3 (115 aa).

A run of 3 helical transmembrane segments spans residues 4–24 (LMAL…AFWL), 55–75 (FFLV…LLPL), and 86–106 (TMML…AYEW).

Belongs to the complex I subunit 3 family. Core subunit of respiratory chain NADH dehydrogenase (Complex I) which is composed of 45 different subunits. Interacts with TMEM186. Interacts with TMEM242.

Its subcellular location is the mitochondrion inner membrane. The enzyme catalyses a ubiquinone + NADH + 5 H(+)(in) = a ubiquinol + NAD(+) + 4 H(+)(out). In terms of biological role, core subunit of the mitochondrial membrane respiratory chain NADH dehydrogenase (Complex I) which catalyzes electron transfer from NADH through the respiratory chain, using ubiquinone as an electron acceptor. Essential for the catalytic activity of complex I. The polypeptide is NADH-ubiquinone oxidoreductase chain 3 (Peromyscus gossypinus (Cotton deermouse)).